We begin with the raw amino-acid sequence, 341 residues long: RNA 3'-terminal phosphate cyclase (341 aa).

ATP contacts are provided by residues Gln102 and 283–287 (HLADQ). Residue His308 is the Tele-AMP-histidine intermediate of the active site.

The protein belongs to the RNA 3'-terminal cyclase family. Type 1 subfamily.

The protein resides in the cytoplasm. The catalysed reaction is a 3'-end 3'-phospho-ribonucleotide-RNA + ATP = a 3'-end 2',3'-cyclophospho-ribonucleotide-RNA + AMP + diphosphate. Catalyzes the conversion of 3'-phosphate to a 2',3'-cyclic phosphodiester at the end of RNA. The mechanism of action of the enzyme occurs in 3 steps: (A) adenylation of the enzyme by ATP; (B) transfer of adenylate to an RNA-N3'P to produce RNA-N3'PP5'A; (C) and attack of the adjacent 2'-hydroxyl on the 3'-phosphorus in the diester linkage to produce the cyclic end product. The biological role of this enzyme is unknown but it is likely to function in some aspects of cellular RNA processing. The sequence is that of RNA 3'-terminal phosphate cyclase from Pseudomonas aeruginosa (strain LESB58).